The primary structure comprises 192 residues: Putative acetyltransferase YjbC (192 aa).

Residues 1–139 (MNWYEKLSEY…MEILYWSPKT (139 aa)) enclose the N-acetyltransferase domain.

Its subcellular location is the cytoplasm. In Bacillus subtilis (strain 168), this protein is Putative acetyltransferase YjbC (yjbC).